The primary structure comprises 152 residues: Ribosome maturation factor RimP (152 aa).

This sequence belongs to the RimP family.

It is found in the cytoplasm. Functionally, required for maturation of 30S ribosomal subunits. This is Ribosome maturation factor RimP from Porphyromonas gingivalis (strain ATCC BAA-308 / W83).